Consider the following 1042-residue polypeptide: Aldehyde reductase lnaA (1042 aa).

Residues 29 to 425 (HAFLNPSAMA…GRRDHQVKVR (397 aa)) are adenylation (A) domain. A Carrier domain is found at 532–609 (DNEDSTRGKL…RLAGILEERI (78 aa)). Ser569 carries the post-translational modification O-(pantetheine 4'-phosphoryl)serine. The tract at residues 655–897 (LTGATGFVGS…FVPVDYVNAV (243 aa)) is short-chain dehydrogenase/reductase (R) domain.

This sequence belongs to the NRP synthetase family.

The enzyme catalyses L-tyrosinal + AMP + diphosphate + NADP(+) = L-tyrosine + ATP + NADPH + H(+). Its pathway is secondary metabolite biosynthesis. Its function is as follows. Non-canonical nonribosomal peptide synthetase; part of the lna gene cluster that mediates the biosynthesis of diastereomeric piperazines. Lna and lnb clusters encode sets of enzymes that produce overlapping sets of previously undescribed metabolites such as piperazinomycin-like metabolites or morpholine. The lna and lnb biosynthetic pathways appear to be part of a signaling network that controls the formation of sclerotia, a resilient overwintering structure. One primary function of the non-canonical nonribosomal peptide synthetases lnaA and lnbA consists in the reduction of L-tyrosine. The presence in the clusters of tailoring enzymes such as the oxidoreductases lnaB, lnbB, lnaE or lnbE, as well as of the cytochrome P450 monooxygenases lnaC, lnaD, or lnbC, might explain formation of various diastereomeric piperazines. This chain is Aldehyde reductase lnaA, found in Aspergillus flavus (strain ATCC 200026 / FGSC A1120 / IAM 13836 / NRRL 3357 / JCM 12722 / SRRC 167).